A 237-amino-acid chain; its full sequence is DNA repair protein RecO (237 aa).

It belongs to the RecO family.

Involved in DNA repair and RecF pathway recombination. This Rickettsia africae (strain ESF-5) protein is DNA repair protein RecO.